The chain runs to 218 residues: Octanoyltransferase (218 aa).

The BPL/LPL catalytic domain maps to 31–206 (REAADEVWLV…QLVKHLDYAE (176 aa)). Substrate-binding positions include 70 to 77 (RGGQVTYH), 137 to 139 (SLG), and 150 to 152 (GLA). Cys-168 acts as the Acyl-thioester intermediate in catalysis.

The protein belongs to the LipB family.

The protein resides in the cytoplasm. The catalysed reaction is octanoyl-[ACP] + L-lysyl-[protein] = N(6)-octanoyl-L-lysyl-[protein] + holo-[ACP] + H(+). It participates in protein modification; protein lipoylation via endogenous pathway; protein N(6)-(lipoyl)lysine from octanoyl-[acyl-carrier-protein]: step 1/2. Catalyzes the transfer of endogenously produced octanoic acid from octanoyl-acyl-carrier-protein onto the lipoyl domains of lipoate-dependent enzymes. Lipoyl-ACP can also act as a substrate although octanoyl-ACP is likely to be the physiological substrate. This Pseudomonas savastanoi pv. phaseolicola (strain 1448A / Race 6) (Pseudomonas syringae pv. phaseolicola (strain 1448A / Race 6)) protein is Octanoyltransferase.